The primary structure comprises 622 residues: Probable potassium transport system protein Kup (622 aa).

12 helical membrane passes run 8–28, 50–70, 100–120, 137–157, 169–189, 203–223, 247–267, 285–305, 337–357, 366–386, 392–412, and 419–439; these read LAAL…TSVL, VLSV…VVLV, GWLL…GVIT, PHFG…LFAV, FGPV…PHIV, ALGF…AVVL, WFSV…ALLL, ALVP…QALI, IYLP…VVMF, AYGI…FFVI, YPLA…LAFF, and LLQG…LMMT.

This sequence belongs to the HAK/KUP transporter (TC 2.A.72) family.

The protein localises to the cell inner membrane. The enzyme catalyses K(+)(in) + H(+)(in) = K(+)(out) + H(+)(out). Transport of potassium into the cell. Likely operates as a K(+):H(+) symporter. This Acidovorax ebreus (strain TPSY) (Diaphorobacter sp. (strain TPSY)) protein is Probable potassium transport system protein Kup.